A 362-amino-acid chain; its full sequence is Myricetin 3'/5'-O-methyltransferase 1 (362 aa).

D229 contributes to the S-adenosyl-L-methionine binding site. H267 functions as the Proton acceptor in the catalytic mechanism.

This sequence belongs to the class I-like SAM-binding methyltransferase superfamily. Cation-independent O-methyltransferase family. As to quaternary structure, homodimer. As to expression, mainly expressed in leaves secreting glandular trichomes types 1 and 4 and, to a lesser extent, in storage trichomes type 6.

The catalysed reaction is myricetin + S-adenosyl-L-methionine = laricitrin + S-adenosyl-L-homocysteine + H(+). It carries out the reaction laricitrin + S-adenosyl-L-methionine = syringetin + S-adenosyl-L-homocysteine + H(+). It catalyses the reaction a 3'-hydroxyflavone + S-adenosyl-L-methionine = a 3'-methoxyflavone + S-adenosyl-L-homocysteine + H(+). The enzyme catalyses a 5'-hydroxy-3'-methoxyflavone + S-adenosyl-L-methionine = a 3',5'-dimethoxyflavone + S-adenosyl-L-homocysteine + H(+). The catalysed reaction is quercetin + S-adenosyl-L-methionine = isorhamnetin + S-adenosyl-L-homocysteine + H(+). It carries out the reaction rhamnetin + S-adenosyl-L-methionine = rhamnacene + S-adenosyl-L-homocysteine + H(+). It catalyses the reaction 3',4',5,7-tetrahydroxy-3-methoxyflavone + S-adenosyl-L-methionine = 3,3'-O-dimethylquercetin + S-adenosyl-L-homocysteine + H(+). Its pathway is flavonoid metabolism. Functionally, flavonoid 3'/5'-O-methyltransferase involved in the biosynthesis of polymethoxylated flavonoids natural products such as myricetin derivatives, aroma compounds possessing antioxidant properties and exhibiting pharmacological activities such as anti-carcinogen, anti-viral, anti-thrombotic, anti-diabetic, anti-atherosclerotic, and anti-inflammatory effects. Catalyzes S-adenosylmethionine-dependent regioselective 3'/5'-O-methylation of flavonoids; active on various hydroxylated flavonoid substrates, including myricetin and quercetin, but inactive toward kaempferol. Mediates the formation of 3'-methyl derivatives from quercetin, myricetin, 3-methyl quercetin and 7-methyl quercetin (rhamnetin), producing 3'-methyl quercetin (isorhamnetin), 3'-methyl myricetin (laricitrin), 3,3'-dimethyl quercetin (3-O-methylisorhamnetin) and 7,3'-dimethyl quercetin (7-O-methylisorhamnetin), respectively. Triggers the 5'-O-methylation of 3'-methyl myricetin (laricitrin), thus leading to production of 3',5'-dimethyl myricetin (syringetin). This is Myricetin 3'/5'-O-methyltransferase 1 from Solanum habrochaites (Wild tomato).